A 369-amino-acid polypeptide reads, in one-letter code: Glutamate 5-kinase (369 aa).

Lysine 9 serves as a coordination point for ATP. Residues serine 49, aspartate 136, and asparagine 148 each coordinate substrate. ATP is bound by residues 168–169 and 210–216; these read TD and TGGMLTK. Positions 275–355 constitute a PUA domain; that stretch reads RGSVYVDEGA…KGVFIHRDDW (81 aa).

It belongs to the glutamate 5-kinase family.

It localises to the cytoplasm. The catalysed reaction is L-glutamate + ATP = L-glutamyl 5-phosphate + ADP. It participates in amino-acid biosynthesis; L-proline biosynthesis; L-glutamate 5-semialdehyde from L-glutamate: step 1/2. In terms of biological role, catalyzes the transfer of a phosphate group to glutamate to form L-glutamate 5-phosphate. The chain is Glutamate 5-kinase from Neisseria meningitidis serogroup B (strain ATCC BAA-335 / MC58).